A 107-amino-acid polypeptide reads, in one-letter code: UPF0145 protein CHY_0465 (107 aa).

This sequence belongs to the UPF0145 family.

The sequence is that of UPF0145 protein CHY_0465 from Carboxydothermus hydrogenoformans (strain ATCC BAA-161 / DSM 6008 / Z-2901).